The following is a 1269-amino-acid chain: Protein flightless-1 homolog (1269 aa).

Position 1 is an N-acetylmethionine (methionine 1). Positions 1–427 (MEATGVLPFV…SGPKDPMARK (427 aa)) are interaction with LRRFIP1 and LRRFIP2. 16 LRR repeats span residues 7 to 32 (LPFV…VKAM), 33 to 55 (TSLR…LAAL), 56 to 78 (QKLE…LSSL), 80 to 103 (SLRA…IFKL), 104 to 126 (DDLS…LENA), 127 to 149 (KNML…LFIN), 150 to 173 (LTDL…MRRL), 175 to 196 (HLQT…QLPA), 197 to 222 (MTAL…LEGL), 223 to 245 (SNLA…LYTL), 247 to 268 (SLRR…IDQW), 269 to 291 (VHVE…ICKL), 293 to 316 (KLKK…IGKL), 318 to 339 (NLEE…LCRC), 340 to 363 (PKLR…HFLT), and 365 to 385 (IEVL…PADR). Lysine 21 bears the N6-acetyllysine mark. Residue serine 406 is modified to Phosphoserine. Serine 436 carries the post-translational modification Phosphoserine; by SGK3. A disordered region spans residues 452 to 473 (VAQEKNKKQEESADARAPSGKV). The segment covering 453–465 (AQEKNKKQEESAD) has biased composition (basic and acidic residues). Residues 495 to 827 (VGQLPGLTIW…TVSRSLEGTE (333 aa)) form an interaction with ACTL6A region. 3 Gelsolin-like repeats span residues 509–591 (FVPV…EEFL), 629–703 (NIKL…PEFW), and 758–831 (ELMP…AQVF). A Phosphothreonine; by SGK3 modification is found at threonine 818. Phosphoserine occurs at positions 856 and 860. Positions 951 to 975 (KKEDKEEKAEGKEGEEATAEAEEKQ) are disordered. Residues 952 to 965 (KEDKEEKAEGKEGE) are compositionally biased toward basic and acidic residues. The span at 966 to 975 (EATAEAEEKQ) shows a compositional bias: acidic residues. 2 Gelsolin-like repeats span residues 1075–1143 (TDSS…PENF) and 1181–1254 (KCSD…QHAF).

As to quaternary structure, interacts with actin, ACTL6A, NCOA2 and CARM1. Interacts with LRRFIP1, LRRFIP2 and MYD88. Upon LPS stimulation, LRRFIP2 competes for MYD88-binding. LRRFIP1 constitutively blocks the interaction with MyD88, even in the absence of LPS. Interacts with the nuclear receptors ESR1 and THRB. Interacts with SGK3. Interacts (via the gelsolin-like region) with TMOD1. Interacts with (via the gelsolin-like region) TMOD3. Interacts with LMOD2, VCL, GSN and DES. In terms of tissue distribution, strongest expression in skeletal muscle with high expression also in the heart and lung.

The protein resides in the nucleus. It is found in the cytoplasm. Its subcellular location is the cytoskeleton. It localises to the microtubule organizing center. The protein localises to the centrosome. The protein resides in the cell projection. It is found in the podosome. Its subcellular location is the cell junction. It localises to the focal adhesion. Is a regulator of actin polymerization, required for proper myofibril organization and regulation of the length of sarcomeric thin filaments. It also plays a role in the assembly of cardiomyocyte cell adhesion complexes. Regulates cytoskeletal rearrangements involved in cytokinesis and cell migration, by inhibiting Rac1-dependent paxillin phosphorylation. May play a role as coactivator in transcriptional activation by hormone-activated nuclear receptors (NR) and acts in cooperation with NCOA2 and CARM1. Involved in estrogen hormone signaling. The protein is Protein flightless-1 homolog (FLII) of Homo sapiens (Human).